The sequence spans 327 residues: Zinc transport protein ZntB (327 aa).

Residues 1-273 lie on the Cytoplasmic side of the membrane; sequence MEAIKGADVN…ARRTYTMSLM (273 aa). The chain crosses the membrane as a helical span at residues 274–294; that stretch reads AMVFLPSTFLTGLFGVNLGGI. Residues 295–300 lie on the Periplasmic side of the membrane; the sequence is PGGGWR. A helical transmembrane segment spans residues 301–321; it reads FGFSLFCILLVVLIGGVALWL. At 322 to 327 the chain is on the cytoplasmic side; that stretch reads HRSKWL.

The protein belongs to the CorA metal ion transporter (MIT) (TC 1.A.35) family.

It is found in the cell inner membrane. It carries out the reaction Zn(2+)(out) + H(+)(out) = Zn(2+)(in) + H(+)(in). Zinc transporter. Acts as a Zn(2+):proton symporter, which likely mediates zinc ion uptake. In Escherichia fergusonii (strain ATCC 35469 / DSM 13698 / CCUG 18766 / IAM 14443 / JCM 21226 / LMG 7866 / NBRC 102419 / NCTC 12128 / CDC 0568-73), this protein is Zinc transport protein ZntB.